The primary structure comprises 261 residues: Imidazole glycerol phosphate synthase subunit HisF (261 aa).

Active-site residues include aspartate 11 and aspartate 130.

Belongs to the HisA/HisF family. Heterodimer of HisH and HisF.

The protein resides in the cytoplasm. The enzyme catalyses 5-[(5-phospho-1-deoxy-D-ribulos-1-ylimino)methylamino]-1-(5-phospho-beta-D-ribosyl)imidazole-4-carboxamide + L-glutamine = D-erythro-1-(imidazol-4-yl)glycerol 3-phosphate + 5-amino-1-(5-phospho-beta-D-ribosyl)imidazole-4-carboxamide + L-glutamate + H(+). It functions in the pathway amino-acid biosynthesis; L-histidine biosynthesis; L-histidine from 5-phospho-alpha-D-ribose 1-diphosphate: step 5/9. IGPS catalyzes the conversion of PRFAR and glutamine to IGP, AICAR and glutamate. The HisF subunit catalyzes the cyclization activity that produces IGP and AICAR from PRFAR using the ammonia provided by the HisH subunit. The protein is Imidazole glycerol phosphate synthase subunit HisF of Heliobacterium modesticaldum (strain ATCC 51547 / Ice1).